A 221-amino-acid chain; its full sequence is Cytochrome c biogenesis ATP-binding export protein CcmA (221 aa).

An ABC transporter domain is found at 14 to 221 (LACHDVSCLR…FDLLDESHFS (208 aa)). Residue 46–53 (GANGIGKS) participates in ATP binding.

The protein belongs to the ABC transporter superfamily. CcmA exporter (TC 3.A.1.107) family. In terms of assembly, the complex is composed of two ATP-binding proteins (CcmA) and two transmembrane proteins (CcmB).

The protein localises to the cell inner membrane. The enzyme catalyses heme b(in) + ATP + H2O = heme b(out) + ADP + phosphate + H(+). Part of the ABC transporter complex CcmAB involved in the biogenesis of c-type cytochromes; once thought to export heme, this seems not to be the case, but its exact role is uncertain. Responsible for energy coupling to the transport system. In Zymomonas mobilis subsp. mobilis (strain ATCC 31821 / ZM4 / CP4), this protein is Cytochrome c biogenesis ATP-binding export protein CcmA.